Consider the following 444-residue polypeptide: Glutamate-1-semialdehyde 2,1-aminomutase (444 aa).

At Lys267 the chain carries N6-(pyridoxal phosphate)lysine.

Belongs to the class-III pyridoxal-phosphate-dependent aminotransferase family. HemL subfamily. As to quaternary structure, homodimer. Pyridoxal 5'-phosphate is required as a cofactor.

The protein resides in the cytoplasm. The catalysed reaction is (S)-4-amino-5-oxopentanoate = 5-aminolevulinate. It participates in porphyrin-containing compound metabolism; protoporphyrin-IX biosynthesis; 5-aminolevulinate from L-glutamyl-tRNA(Glu): step 2/2. In Xylella fastidiosa (strain Temecula1 / ATCC 700964), this protein is Glutamate-1-semialdehyde 2,1-aminomutase.